A 282-amino-acid polypeptide reads, in one-letter code: MAQHVKKPEWLKIRLGGNEKFTETKSIVEGHCLHTICTSGKCPNMGECWSRGTATFMIGGDICTRACRFCNTLTGRPKPLNEAEPTHVALSIKLMGLNHAVVTSVDRDDLPDYGAAHWVKTIQEIRRINSGVTLEVLIPDFKGRMDLVDMIIEASPDVISHNLETVRRLTPSVRSVATYDTSLAVLRHIAQSGKMPAKTGMMLGLGETEEEILELMDDALAAGVSVITIGQYLQPSRKNLPVVEYITPEQFEHLRLVGIEKGFRTIESAPLVRSSYHAERHL.

Positions 37, 42, 48, 63, 67, 70, and 275 each coordinate [4Fe-4S] cluster. Positions 49 to 264 (WSRGTATFMI…RLVGIEKGFR (216 aa)) constitute a Radical SAM core domain.

It belongs to the radical SAM superfamily. Lipoyl synthase family. [4Fe-4S] cluster serves as cofactor.

It localises to the cytoplasm. It catalyses the reaction [[Fe-S] cluster scaffold protein carrying a second [4Fe-4S](2+) cluster] + N(6)-octanoyl-L-lysyl-[protein] + 2 oxidized [2Fe-2S]-[ferredoxin] + 2 S-adenosyl-L-methionine + 4 H(+) = [[Fe-S] cluster scaffold protein] + N(6)-[(R)-dihydrolipoyl]-L-lysyl-[protein] + 4 Fe(3+) + 2 hydrogen sulfide + 2 5'-deoxyadenosine + 2 L-methionine + 2 reduced [2Fe-2S]-[ferredoxin]. It participates in protein modification; protein lipoylation via endogenous pathway; protein N(6)-(lipoyl)lysine from octanoyl-[acyl-carrier-protein]: step 2/2. Its function is as follows. Catalyzes the radical-mediated insertion of two sulfur atoms into the C-6 and C-8 positions of the octanoyl moiety bound to the lipoyl domains of lipoate-dependent enzymes, thereby converting the octanoylated domains into lipoylated derivatives. The sequence is that of Lipoyl synthase from Porphyromonas gingivalis (strain ATCC BAA-308 / W83).